A 274-amino-acid chain; its full sequence is Proteasome subunit beta (274 aa).

Residues 1–52 (MADPMGGAGRLPAVFMTPGTSSFTDFLSQSAPHLLPGARGGLPGPVTEVAHG) constitute a propeptide, removed in mature form; by autocatalysis. The Nucleophile role is filled by threonine 53.

It belongs to the peptidase T1B family. The 20S proteasome core is composed of 14 alpha and 14 beta subunits that assemble into four stacked heptameric rings, resulting in a barrel-shaped structure. The two inner rings, each composed of seven catalytic beta subunits, are sandwiched by two outer rings, each composed of seven alpha subunits. The catalytic chamber with the active sites is on the inside of the barrel. Has a gated structure, the ends of the cylinder being occluded by the N-termini of the alpha-subunits. Is capped by the proteasome-associated ATPase, ARC.

The protein localises to the cytoplasm. The enzyme catalyses Cleavage of peptide bonds with very broad specificity.. It functions in the pathway protein degradation; proteasomal Pup-dependent pathway. Its activity is regulated as follows. The formation of the proteasomal ATPase ARC-20S proteasome complex, likely via the docking of the C-termini of ARC into the intersubunit pockets in the alpha-rings, may trigger opening of the gate for substrate entry. Interconversion between the open-gate and close-gate conformations leads to a dynamic regulation of the 20S proteasome proteolysis activity. Functionally, component of the proteasome core, a large protease complex with broad specificity involved in protein degradation. This Frankia alni (strain DSM 45986 / CECT 9034 / ACN14a) protein is Proteasome subunit beta.